We begin with the raw amino-acid sequence, 524 residues long: GMP synthase [glutamine-hydrolyzing] (524 aa).

A Glutamine amidotransferase type-1 domain is found at R9 to N207. C86 acts as the Nucleophile in catalysis. Residues H181 and E183 contribute to the active site. The GMPS ATP-PPase domain occupies W208–R399. S235–A241 is a binding site for ATP.

In terms of assembly, homodimer.

The catalysed reaction is XMP + L-glutamine + ATP + H2O = GMP + L-glutamate + AMP + diphosphate + 2 H(+). It participates in purine metabolism; GMP biosynthesis; GMP from XMP (L-Gln route): step 1/1. Catalyzes the synthesis of GMP from XMP. The polypeptide is GMP synthase [glutamine-hydrolyzing] (Coxiella burnetii (strain RSA 331 / Henzerling II)).